The following is a 49-amino-acid chain: Large ribosomal subunit protein bL33 (49 aa).

The protein belongs to the bacterial ribosomal protein bL33 family.

This is Large ribosomal subunit protein bL33 from Desulforamulus reducens (strain ATCC BAA-1160 / DSM 100696 / MI-1) (Desulfotomaculum reducens).